A 312-amino-acid chain; its full sequence is Elongation factor Ts, mitochondrial (312 aa).

The protein belongs to the EF-Ts family.

It is found in the mitochondrion. Its function is as follows. Associates with the EF-Tu.GDP complex and induces the exchange of GDP to GTP. It remains bound to the aminoacyl-tRNA.EF-Tu.GTP complex up to the GTP hydrolysis stage on the ribosome. This Xenopus laevis (African clawed frog) protein is Elongation factor Ts, mitochondrial (tsfm).